The following is a 110-amino-acid chain: Large ribosomal subunit protein P1 (110 aa).

Ala2 carries the blocked amino end (Ala) modification. The segment covering 69–83 (AAPAAGGAAAATEAP) has biased composition (low complexity). A disordered region spans residues 69–110 (AAPAAGGAAAATEAPAAKEEKKEEKKEESEEEDEDMGFGLFD). Basic and acidic residues predominate over residues 84–96 (AAKEEKKEEKKEE). Residue Ser97 is modified to Phosphoserine; in form eL12'-P.

In terms of assembly, part of the ribosomal stalk of the large ribosomal subunit; P1 and P2 exist as dimers which assemble on the P0 scaffold. In terms of processing, phosphorylation of Ser-97 converts eL12' to eL12'-P.

In terms of biological role, plays an important role in the elongation step of protein synthesis. In Artemia salina (Brine shrimp), this protein is Large ribosomal subunit protein P1.